The sequence spans 430 residues: Adenylosuccinate synthetase (430 aa).

Residues 12–18 and 40–42 contribute to the GTP site; these read GDEGKGK and GHT. The active-site Proton acceptor is the D13. 2 residues coordinate Mg(2+): D13 and G40. IMP is bound by residues 13–16, 38–41, T129, R143, Q224, T239, and R303; these read DEGK and NAGH. Residue H41 is the Proton donor of the active site. Substrate is bound at residue 299–305; it reads ATTGRRR. Residues R305, 331–333, and 413–415 contribute to the GTP site; these read KLD and SVG.

It belongs to the adenylosuccinate synthetase family. Homodimer. The cofactor is Mg(2+).

The protein resides in the cytoplasm. It catalyses the reaction IMP + L-aspartate + GTP = N(6)-(1,2-dicarboxyethyl)-AMP + GDP + phosphate + 2 H(+). The protein operates within purine metabolism; AMP biosynthesis via de novo pathway; AMP from IMP: step 1/2. Plays an important role in the de novo pathway of purine nucleotide biosynthesis. Catalyzes the first committed step in the biosynthesis of AMP from IMP. This Desulfatibacillum aliphaticivorans protein is Adenylosuccinate synthetase.